A 355-amino-acid polypeptide reads, in one-letter code: dTDP-D-glucose 4,6-dehydratase (355 aa).

Residue Thr142 participates in substrate binding. Asp143 (proton donor) is an active-site residue. Residues Glu144 and Tyr166 each act as proton acceptor in the active site.

It belongs to the NAD(P)-dependent epimerase/dehydratase family. dTDP-glucose dehydratase subfamily. The cofactor is NAD(+).

The enzyme catalyses dTDP-alpha-D-glucose = dTDP-4-dehydro-6-deoxy-alpha-D-glucose + H2O. This is dTDP-D-glucose 4,6-dehydratase (Tgds) from Mus musculus (Mouse).